Here is a 432-residue protein sequence, read N- to C-terminus: DnaJ-like protein 1 (432 aa).

A J domain is found at 4-73; sequence DTEYYDLLGV…RAKYDKYGRK (70 aa). The segment at 117 to 187 is disordered; sequence NAEDEAEKEK…KKNEQVGAEA (71 aa).

This sequence belongs to the DnaJ family. Interacts with SLN1.

The protein resides in the cytoplasm. In terms of biological role, required for peroxisomal protein import which maintains the function of peroxisomes. The protein is DnaJ-like protein 1 (DJP1) of Saccharomyces cerevisiae (strain ATCC 204508 / S288c) (Baker's yeast).